The chain runs to 136 residues: NADPH-dependent 7-cyano-7-deazaguanine reductase (136 aa).

The active-site Thioimide intermediate is the cysteine 50. The active-site Proton donor is the aspartate 57. Substrate contacts are provided by residues 72–74 (YEL) and 91–92 (HE).

It belongs to the GTP cyclohydrolase I family. QueF type 1 subfamily.

It is found in the cytoplasm. It catalyses the reaction 7-aminomethyl-7-carbaguanine + 2 NADP(+) = 7-cyano-7-deazaguanine + 2 NADPH + 3 H(+). It functions in the pathway tRNA modification; tRNA-queuosine biosynthesis. In terms of biological role, catalyzes the NADPH-dependent reduction of 7-cyano-7-deazaguanine (preQ0) to 7-aminomethyl-7-deazaguanine (preQ1). The sequence is that of NADPH-dependent 7-cyano-7-deazaguanine reductase from Prochlorococcus marinus (strain MIT 9215).